The chain runs to 111 residues: Nucleoid-associated protein PFL_1905 (111 aa).

Disordered stretches follow at residues 1–20 (MKGGMAGLMKQAQQMQEKMA) and 88–111 (SNSQEKMSGMTAGMQLPPGMKLPF).

It belongs to the YbaB/EbfC family. In terms of assembly, homodimer.

The protein resides in the cytoplasm. It is found in the nucleoid. Functionally, binds to DNA and alters its conformation. May be involved in regulation of gene expression, nucleoid organization and DNA protection. The polypeptide is Nucleoid-associated protein PFL_1905 (Pseudomonas fluorescens (strain ATCC BAA-477 / NRRL B-23932 / Pf-5)).